A 124-amino-acid polypeptide reads, in one-letter code: Small ribosomal subunit protein uS12 (124 aa).

A 3-methylthioaspartic acid modification is found at Asp-89.

Belongs to the universal ribosomal protein uS12 family. In terms of assembly, part of the 30S ribosomal subunit. Contacts proteins S8 and S17. May interact with IF1 in the 30S initiation complex.

Functionally, with S4 and S5 plays an important role in translational accuracy. Interacts with and stabilizes bases of the 16S rRNA that are involved in tRNA selection in the A site and with the mRNA backbone. Located at the interface of the 30S and 50S subunits, it traverses the body of the 30S subunit contacting proteins on the other side and probably holding the rRNA structure together. The combined cluster of proteins S8, S12 and S17 appears to hold together the shoulder and platform of the 30S subunit. This chain is Small ribosomal subunit protein uS12, found in Koribacter versatilis (strain Ellin345).